The primary structure comprises 262 residues: Acyl-[acyl-carrier-protein]--UDP-N-acetylglucosamine O-acyltransferase (262 aa).

It belongs to the transferase hexapeptide repeat family. LpxA subfamily. As to quaternary structure, homotrimer.

It is found in the cytoplasm. The catalysed reaction is a (3R)-hydroxyacyl-[ACP] + UDP-N-acetyl-alpha-D-glucosamine = a UDP-3-O-[(3R)-3-hydroxyacyl]-N-acetyl-alpha-D-glucosamine + holo-[ACP]. It participates in glycolipid biosynthesis; lipid IV(A) biosynthesis; lipid IV(A) from (3R)-3-hydroxytetradecanoyl-[acyl-carrier-protein] and UDP-N-acetyl-alpha-D-glucosamine: step 1/6. Its function is as follows. Involved in the biosynthesis of lipid A, a phosphorylated glycolipid that anchors the lipopolysaccharide to the outer membrane of the cell. This Shigella flexneri serotype 5b (strain 8401) protein is Acyl-[acyl-carrier-protein]--UDP-N-acetylglucosamine O-acyltransferase.